The primary structure comprises 644 residues: Pentatricopeptide repeat-containing protein At1g12775, mitochondrial (644 aa).

A mitochondrion-targeting transit peptide spans 1–53 (MVRMMIRRLSSQASRFVQPRLLETGTLRIALINCPNELLFCCERGFSTFSDRN). PPR repeat units lie at residues 87-121 (TVIDFNRLFSAIAKTKQYELVLALCKQMESKGIAH), 122-156 (SIYTLSIMINCFCRCRKLSYAFSTMGKIMKLGYEP), 157-191 (DTVIFNTLLNGLCLECRVSEALELVDRMVEMGHKP), 192-226 (TLITLNTLVNGLCLNGKVSDAVVLIDRMVETGFQP), 227-261 (NEVTYGPVLNVMCKSGQTALAMELLRKMEERNIKL), 262-296 (DAVKYSIIIDGLCKDGSLDNAFNLFNEMEIKGFKA), 297-331 (DIITYNTLIGGFCNAGRWDDGAKLLRDMIKRKISP), 332-366 (NVVTFSVLIDSFVKEGKLREADQLLKEMMQRGIAP), 367-401 (NTITYNSLIDGFCKENRLEEAIQMVDLMISKGCDP), 402-436 (DIMTFNILINGYCKANRIDDGLELFREMSLRGVIA), 437-471 (NTVTYNTLVQGFCQSGKLEVAKKLFQEMVSRRVRP), 472-506 (DIVSYKILLDGLCDNGELEKALEIFGKIEKSKMEL), 507-541 (DIGIYMIIIHGMCNASKVDDAWDLFCSLPLKGVKL), 542-576 (DARAYNIMISELCRKDSLSKADILFRKMTEEGHAP), and 577-611 (DELTYNILIRAHLGDDDATTAAELIEEMKSSGFPA).

It belongs to the PPR family. P subfamily.

It is found in the mitochondrion. This chain is Pentatricopeptide repeat-containing protein At1g12775, mitochondrial, found in Arabidopsis thaliana (Mouse-ear cress).